The following is a 53-amino-acid chain: UPF0391 membrane protein YPDSF_3201 (53 aa).

Helical transmembrane passes span 4 to 24 (WGIIFLIIALIEAALGFGGLA) and 27 to 47 (AAWAAKVVFVVGIILFLISLF).

This sequence belongs to the UPF0391 family.

The protein localises to the cell membrane. The protein is UPF0391 membrane protein YPDSF_3201 of Yersinia pestis (strain Pestoides F).